The primary structure comprises 592 residues: Aspartate--tRNA(Asp/Asn) ligase (592 aa).

Residue Glu175 coordinates L-aspartate. The interval 199-202 is aspartate; it reads QLFK. Residue Arg221 coordinates L-aspartate. Residues 221–223 and Gln230 each bind ATP; that span reads RDE. His447 contacts L-aspartate. Position 481 (Glu481) interacts with ATP. Arg488 serves as a coordination point for L-aspartate. Position 533 to 536 (533 to 536) interacts with ATP; it reads GIDR.

The protein belongs to the class-II aminoacyl-tRNA synthetase family. Type 1 subfamily. As to quaternary structure, homodimer.

The protein resides in the cytoplasm. The enzyme catalyses tRNA(Asx) + L-aspartate + ATP = L-aspartyl-tRNA(Asx) + AMP + diphosphate. Functionally, aspartyl-tRNA synthetase with relaxed tRNA specificity since it is able to aspartylate not only its cognate tRNA(Asp) but also tRNA(Asn). Reaction proceeds in two steps: L-aspartate is first activated by ATP to form Asp-AMP and then transferred to the acceptor end of tRNA(Asp/Asn). This chain is Aspartate--tRNA(Asp/Asn) ligase, found in Dictyoglomus turgidum (strain DSM 6724 / Z-1310).